Reading from the N-terminus, the 421-residue chain is ATP-dependent RNA helicase RhlB (421 aa).

A Q motif motif is present at residues 9–37 (QKFSDFSLHPKVVEALEKKGFHNCTPIQA). The region spanning 40-219 (LPLTLAGRDV…FEQMNNAEYI (180 aa)) is the Helicase ATP-binding domain. ATP is bound at residue 53–60 (AQTGTGKT). The DEAD box signature appears at 165–168 (DEAD). The Helicase C-terminal domain maps to 245–390 (RLLQTLIEEE…VSKYNPDALM (146 aa)). Positions 392-421 (DLPKPLRLTRPRTGNGPRRTGAPRNRRRSG) are disordered. A compositionally biased stretch (low complexity) spans 402–414 (PRTGNGPRRTGAP).

The protein belongs to the DEAD box helicase family. RhlB subfamily. In terms of assembly, component of the RNA degradosome, which is a multiprotein complex involved in RNA processing and mRNA degradation.

It is found in the cytoplasm. It carries out the reaction ATP + H2O = ADP + phosphate + H(+). Functionally, DEAD-box RNA helicase involved in RNA degradation. Has RNA-dependent ATPase activity and unwinds double-stranded RNA. The chain is ATP-dependent RNA helicase RhlB from Shigella dysenteriae serotype 1 (strain Sd197).